The primary structure comprises 294 residues: Potassium-transporting ATPase subunit beta (294 aa).

The Cytoplasmic segment spans residues 1-36; the sequence is MAALQEKKSCSQRMAEFRQYCWNPDTGQMLGRTPAR. Residues 37–57 traverse the membrane as a helical; Signal-anchor for type II membrane protein segment; it reads WVWISLYYAAFYVVMTGLFAL. At 58 to 294 the chain is on the extracellular side; that stretch reads CIYVLMQTID…KVEFKLTIQK (237 aa). Residues Asn-99, Asn-103, Asn-130, Asn-146, and Asn-161 are each glycosylated (N-linked (GlcNAc...) asparagine). A disulfide bridge connects residues Cys-131 and Cys-152. Cys-162 and Cys-178 are oxidised to a cystine. N-linked (GlcNAc...) asparagine glycosylation is found at Asn-193 and Asn-225. Positions 194–294 are immunoglobulin-like; it reads NTAPRVDCTF…KVEFKLTIQK (101 aa). Cys-201 and Cys-266 form a disulfide bridge.

It belongs to the X(+)/potassium ATPases subunit beta family. As to quaternary structure, the ATPase pump is composed of two subunits: alpha (catalytic) and beta (regulatory). Interacts with alpha subunit ATP12A; this interaction is required for the formation of a functionally active pump and targeting at the plasma membrane. Interacts (via N-terminus) with alpha subunit ATP4A (via the P-domain). In terms of processing, N-glycosylation is necessary for assembly and functional expression of the pump at the plasma membrane. As to expression, stomach.

The protein resides in the apical cell membrane. It is found in the cell membrane. The beta subunit of the gastric H(+)/K(+) ATPase pump which transports H(+) ions in exchange for K(+) ions across the apical membrane of parietal cells. Plays a structural and regulatory role in the assembly and membrane targeting of a functionally active pump. Within a transport cycle, the transfer of a H(+) ion across the membrane is coupled to ATP hydrolysis and is associated with a transient phosphorylation of the alpha subunit that shifts the pump conformation from inward-facing (E1) to outward-facing state (E2). Interacts with the phosphorylation domain of the alpha subunit and functions as a ratchet, stabilizing the lumenal-open E2 conformation and preventing the reverse reaction of the transport cycle. This is Potassium-transporting ATPase subunit beta (Atp4b) from Rattus norvegicus (Rat).